The chain runs to 365 residues: 3-dehydroquinate synthase (365 aa).

NAD(+)-binding positions include 107–111, 131–132, lysine 144, and lysine 153; these read GVIGD and TT. 3 residues coordinate Zn(2+): glutamate 186, histidine 251, and histidine 268.

This sequence belongs to the sugar phosphate cyclases superfamily. Dehydroquinate synthase family. Requires Co(2+) as cofactor. It depends on Zn(2+) as a cofactor. The cofactor is NAD(+).

The protein localises to the cytoplasm. The catalysed reaction is 7-phospho-2-dehydro-3-deoxy-D-arabino-heptonate = 3-dehydroquinate + phosphate. Its pathway is metabolic intermediate biosynthesis; chorismate biosynthesis; chorismate from D-erythrose 4-phosphate and phosphoenolpyruvate: step 2/7. Its function is as follows. Catalyzes the conversion of 3-deoxy-D-arabino-heptulosonate 7-phosphate (DAHP) to dehydroquinate (DHQ). This chain is 3-dehydroquinate synthase, found in Picosynechococcus sp. (strain ATCC 27264 / PCC 7002 / PR-6) (Agmenellum quadruplicatum).